The following is a 259-amino-acid chain: 12alpha-hydroxysteroid dehydrogenase (259 aa).

Tyr162 acts as the Proton acceptor in catalysis.

This sequence belongs to the short-chain dehydrogenases/reductases (SDR) family. Homotetramer.

It catalyses the reaction cholate + NADP(+) = 3alpha,7alpha-dihydroxy-12-oxo-5beta-cholanate + NADPH + H(+). It carries out the reaction deoxycholate + NADP(+) = 12-dehydrodeoxycholate + NADPH + H(+). Its function is as follows. Catalyzes the oxidation of the 12alpha-hydroxy group of bile acids, like cholate and deoxycholate. Is also able to catalyze the reverse reaction in vitro. Is likely involved in an epimerization pathway of bile acids that converts hydroxy groups from alpha to beta positions via stable oxo-intermediates, which occurs in the human gut. This chain is 12alpha-hydroxysteroid dehydrogenase, found in Clostridium sp. (strain ATCC 29733 / VPI C48-50).